We begin with the raw amino-acid sequence, 388 residues long: MRKSQKLAFRKGQFRITDITGVSLRGEIIKQIIKPTIHAVFDVAVEEMDHDVDDIEILFITREEEEERRREDPDLYRLDAWDREVLKKTSMDEHNYKSPINCIYEYDYDVLQPVANFEEFFEIDFDHVPLWKVDIYGDFAFYGSDPYIKETKEYPEEYISDEKRSEVELDYLLYNSTKLEQHRQYIIKNKEHFTDVKPQILETGERAEHLLMKRFYYNKIDNVIERKQEIEEDPIYTYIKFDFGAKLDLRIARLYYLNFTRMERMDLENQQKLYEFEKAALKGIAFDNFMILFGVFLIWATHPYLYKKIPWRIRYFFEFHRDEVIEYILMIPQIPKITWEEIKAYWTGQVMFTVIPTFQYAWSFLGKKIDLETIQAWKILAKTLNDIY.

It is found in the mitochondrion. This is an uncharacterized protein from Dictyostelium citrinum (Slime mold).